We begin with the raw amino-acid sequence, 419 residues long: Putative L-glutamine:3-amino-2,3-dideoxy-scyllo-inosose aminotransferase (419 aa).

Position 199 is an N6-(pyridoxal phosphate)lysine (Lys-199).

Belongs to the DegT/DnrJ/EryC1 family. L-glutamine:2-deoxy-scyllo-inosose/scyllo-inosose aminotransferase subfamily. The cofactor is pyridoxal 5'-phosphate.

It catalyses the reaction 3-amino-2,3-dideoxy-scyllo-inosose + L-glutamine = 2-deoxystreptamine + 2-oxoglutaramate. Its pathway is metabolic intermediate biosynthesis; 2-deoxystreptamine biosynthesis; 2-deoxystreptamine from D-glucose 6-phosphate: step 4/4. The protein operates within antibiotic biosynthesis; kanamycin biosynthesis. Its function is as follows. Catalyzes the transamination of 3-amino-2,3-dideoxy-scyllo-inosose (amino-DOI) into 2-deoxystreptamine (DOS). This is Putative L-glutamine:3-amino-2,3-dideoxy-scyllo-inosose aminotransferase (kanD) from Streptomyces kanamyceticus.